The primary structure comprises 508 residues: Mitochondrial distribution and morphology protein 10 (508 aa).

The interval 160–195 is disordered; it reads PAHPTSTRPTPPQTPPSHTRQPSEPSTPAPSPTPGN.

The protein belongs to the MDM10 family. As to quaternary structure, component of the ER-mitochondria encounter structure (ERMES) or MDM complex, composed of MMM1, MDM10, MDM12 and MDM34. Associates with the mitochondrial outer membrane sorting assembly machinery SAM(core) complex.

It localises to the mitochondrion outer membrane. In terms of biological role, component of the ERMES/MDM complex, which serves as a molecular tether to connect the endoplasmic reticulum and mitochondria. Components of this complex are involved in the control of mitochondrial shape and protein biogenesis and may function in phospholipid exchange. MDM10 is involved in the late assembly steps of the general translocase of the mitochondrial outer membrane (TOM complex). Functions in the TOM40-specific route of the assembly of outer membrane beta-barrel proteins, including the association of TOM40 with the receptor TOM22 and small TOM proteins. Can associate with the SAM(core) complex as well as the MDM12-MMM1 complex, both involved in late steps of the major beta-barrel assembly pathway, that is responsible for biogenesis of all outer membrane beta-barrel proteins. May act as a switch that shuttles between both complexes and channels precursor proteins into the TOM40-specific pathway. Plays a role in mitochondrial morphology and in the inheritance of mitochondria. This Cryptococcus neoformans var. neoformans serotype D (strain JEC21 / ATCC MYA-565) (Filobasidiella neoformans) protein is Mitochondrial distribution and morphology protein 10.